Consider the following 124-residue polypeptide: KESAAMKFERQHMDSTVATSSSPTYCNQMMKRRNMTQGYCKPVNTFVHESLADVHAVCSQENVACKNGKSNCYKSHSALHITDCRLKGNAKYPNCDYQTSQLQKQIIVACEGNPFVPVHFDASV.

Positions 7 and 10 each coordinate substrate. H12 serves as the catalytic Proton acceptor. Cystine bridges form between C26/C84, C40/C95, C58/C110, and C65/C72. An N-linked (GlcNAc...) asparagine glycan is attached at N34. Substrate is bound by residues K41–T45, K66, and R85. The active-site Proton donor is the H119.

This sequence belongs to the pancreatic ribonuclease family. In terms of assembly, monomer. Interacts with and forms tight 1:1 complexes with RNH1. Dimerization of two such complexes may occur. Interaction with RNH1 inhibits this protein. Pancreas.

Its subcellular location is the secreted. It catalyses the reaction an [RNA] containing cytidine + H2O = an [RNA]-3'-cytidine-3'-phosphate + a 5'-hydroxy-ribonucleotide-3'-[RNA].. The enzyme catalyses an [RNA] containing uridine + H2O = an [RNA]-3'-uridine-3'-phosphate + a 5'-hydroxy-ribonucleotide-3'-[RNA].. Functionally, endonuclease that catalyzes the cleavage of RNA on the 3' side of pyrimidine nucleotides. Acts on single-stranded and double-stranded RNA. This is Ribonuclease pancreatic (RNASE1) from Mesocricetus auratus (Golden hamster).